The primary structure comprises 443 residues: Xaa-Pro dipeptidase (443 aa).

Residues Asp-246, Asp-257, His-339, Glu-384, and Glu-423 each contribute to the Mn(2+) site.

Belongs to the peptidase M24B family. Bacterial-type prolidase subfamily. Requires Mn(2+) as cofactor.

It carries out the reaction Xaa-L-Pro dipeptide + H2O = an L-alpha-amino acid + L-proline. In terms of biological role, splits dipeptides with a prolyl residue in the C-terminal position. This Klebsiella pneumoniae (strain 342) protein is Xaa-Pro dipeptidase.